Reading from the N-terminus, the 176-residue chain is ATP-dependent protease subunit HslV (176 aa).

T2 is an active-site residue. The Na(+) site is built by G157, C160, and T163.

The protein belongs to the peptidase T1B family. HslV subfamily. A double ring-shaped homohexamer of HslV is capped on each side by a ring-shaped HslU homohexamer. The assembly of the HslU/HslV complex is dependent on binding of ATP.

The protein resides in the cytoplasm. The catalysed reaction is ATP-dependent cleavage of peptide bonds with broad specificity.. Allosterically activated by HslU binding. Its function is as follows. Protease subunit of a proteasome-like degradation complex believed to be a general protein degrading machinery. The polypeptide is ATP-dependent protease subunit HslV (Pectobacterium carotovorum subsp. carotovorum (strain PC1)).